Here is a 366-residue protein sequence, read N- to C-terminus: Chorismate synthase (366 aa).

2 residues coordinate NADP(+): R48 and R54. Residues 132–134 (RSS), 244–245 (NA), G289, 304–308 (KPTSS), and R330 contribute to the FMN site.

Belongs to the chorismate synthase family. As to quaternary structure, homotetramer. FMNH2 serves as cofactor.

The enzyme catalyses 5-O-(1-carboxyvinyl)-3-phosphoshikimate = chorismate + phosphate. The protein operates within metabolic intermediate biosynthesis; chorismate biosynthesis; chorismate from D-erythrose 4-phosphate and phosphoenolpyruvate: step 7/7. In terms of biological role, catalyzes the anti-1,4-elimination of the C-3 phosphate and the C-6 proR hydrogen from 5-enolpyruvylshikimate-3-phosphate (EPSP) to yield chorismate, which is the branch point compound that serves as the starting substrate for the three terminal pathways of aromatic amino acid biosynthesis. This reaction introduces a second double bond into the aromatic ring system. The protein is Chorismate synthase of Methylorubrum extorquens (strain PA1) (Methylobacterium extorquens).